A 430-amino-acid polypeptide reads, in one-letter code: Serine--tRNA ligase (430 aa).

Position 237–239 (Thr-237–Glu-239) interacts with L-serine. Arg-268 to Glu-270 contributes to the ATP binding site. L-serine is bound at residue Glu-291. Residue Glu-355–Ser-358 participates in ATP binding. L-serine is bound at residue Ser-391.

It belongs to the class-II aminoacyl-tRNA synthetase family. Type-1 seryl-tRNA synthetase subfamily. Homodimer. The tRNA molecule binds across the dimer.

It localises to the cytoplasm. The catalysed reaction is tRNA(Ser) + L-serine + ATP = L-seryl-tRNA(Ser) + AMP + diphosphate + H(+). It catalyses the reaction tRNA(Sec) + L-serine + ATP = L-seryl-tRNA(Sec) + AMP + diphosphate + H(+). Its pathway is aminoacyl-tRNA biosynthesis; selenocysteinyl-tRNA(Sec) biosynthesis; L-seryl-tRNA(Sec) from L-serine and tRNA(Sec): step 1/1. Catalyzes the attachment of serine to tRNA(Ser). Is also able to aminoacylate tRNA(Sec) with serine, to form the misacylated tRNA L-seryl-tRNA(Sec), which will be further converted into selenocysteinyl-tRNA(Sec). In Escherichia fergusonii (strain ATCC 35469 / DSM 13698 / CCUG 18766 / IAM 14443 / JCM 21226 / LMG 7866 / NBRC 102419 / NCTC 12128 / CDC 0568-73), this protein is Serine--tRNA ligase.